Consider the following 634-residue polypeptide: Phosphatase and actin regulator 2 (634 aa).

Disordered regions lie at residues 1–32 (MDNA…KRKG), 84–344 (LPDQ…PLED), 412–471 (PQLL…ALAS), and 485–508 (NRPS…ERQE). Aspartate 2 carries the N-myristoyl glycine lipid modification. Residues 13 to 26 (IANSDGPTAGSQTP) are compositionally biased toward polar residues. Serine 16 is modified (phosphoserine). Position 25 is a phosphothreonine (threonine 25). The stretch at 60-85 (AVLERKISTRQSREELIRRGVLKELP) is one RPEL 1 repeat. Composition is skewed to basic and acidic residues over residues 108 to 120 (ESTR…KSEE) and 137 to 147 (EDKKENTENHS). Over residues 153–162 (PALPPSAPPK) the composition is skewed to pro residues. Composition is skewed to low complexity over residues 231–247 (GSKA…SSRP) and 276–290 (TSHL…GTSD). Positions 291–304 (LKGEPAETRVESFK) are enriched in basic and acidic residues. The span at 324-341 (VPPPPVAPAPSPLAPPLP) shows a compositional bias: pro residues. At serine 423 the chain carries Phosphoserine. Positions 452–464 (TDDEDEDEDEDGS) are enriched in acidic residues. RPEL repeat units follow at residues 477-502 (DTLA…QRTS), 515-540 (TKLV…KQKN), and 553-578 (RRLS…RFNE). The segment covering 488–508 (SKKELEDKNILQRTSEEERQE) has biased composition (basic and acidic residues). Phosphoserine occurs at positions 522 and 560.

Belongs to the phosphatase and actin regulator family. In terms of assembly, binds PPP1CA and actin.

It localises to the membrane. This chain is Phosphatase and actin regulator 2 (PHACTR2), found in Homo sapiens (Human).